Reading from the N-terminus, the 245-residue chain is 1-(5-phosphoribosyl)-5-[(5-phosphoribosylamino)methylideneamino] imidazole-4-carboxamide isomerase (245 aa).

Aspartate 7 serves as the catalytic Proton acceptor. Residue aspartate 129 is the Proton donor of the active site.

Belongs to the HisA/HisF family.

It localises to the cytoplasm. The catalysed reaction is 1-(5-phospho-beta-D-ribosyl)-5-[(5-phospho-beta-D-ribosylamino)methylideneamino]imidazole-4-carboxamide = 5-[(5-phospho-1-deoxy-D-ribulos-1-ylimino)methylamino]-1-(5-phospho-beta-D-ribosyl)imidazole-4-carboxamide. The protein operates within amino-acid biosynthesis; L-histidine biosynthesis; L-histidine from 5-phospho-alpha-D-ribose 1-diphosphate: step 4/9. In Escherichia coli O7:K1 (strain IAI39 / ExPEC), this protein is 1-(5-phosphoribosyl)-5-[(5-phosphoribosylamino)methylideneamino] imidazole-4-carboxamide isomerase.